Consider the following 211-residue polypeptide: Imidazole glycerol phosphate synthase subunit HisH (211 aa).

The Glutamine amidotransferase type-1 domain maps to 3-211; sequence VIAVVDYEMG…VAQVREKIPA (209 aa). Cysteine 81 serves as the catalytic Nucleophile. Active-site residues include histidine 186 and glutamate 188.

As to quaternary structure, heterodimer of HisH and HisF.

Its subcellular location is the cytoplasm. It catalyses the reaction 5-[(5-phospho-1-deoxy-D-ribulos-1-ylimino)methylamino]-1-(5-phospho-beta-D-ribosyl)imidazole-4-carboxamide + L-glutamine = D-erythro-1-(imidazol-4-yl)glycerol 3-phosphate + 5-amino-1-(5-phospho-beta-D-ribosyl)imidazole-4-carboxamide + L-glutamate + H(+). It carries out the reaction L-glutamine + H2O = L-glutamate + NH4(+). The protein operates within amino-acid biosynthesis; L-histidine biosynthesis; L-histidine from 5-phospho-alpha-D-ribose 1-diphosphate: step 5/9. Its function is as follows. IGPS catalyzes the conversion of PRFAR and glutamine to IGP, AICAR and glutamate. The HisH subunit catalyzes the hydrolysis of glutamine to glutamate and ammonia as part of the synthesis of IGP and AICAR. The resulting ammonia molecule is channeled to the active site of HisF. The sequence is that of Imidazole glycerol phosphate synthase subunit HisH from Nostoc punctiforme (strain ATCC 29133 / PCC 73102).